Reading from the N-terminus, the 326-residue chain is Putative ribose-phosphate pyrophosphokinase 2 (326 aa).

Residues 43–45 (DGE) and 102–103 (RQ) each bind ATP. Residue His136 coordinates Mg(2+). D-ribose 5-phosphate contacts are provided by residues Asp226 and 230-234 (NTGKT).

Belongs to the ribose-phosphate pyrophosphokinase family. Class I subfamily. As to quaternary structure, homohexamer. It depends on Mg(2+) as a cofactor.

The protein localises to the cytoplasm. It catalyses the reaction D-ribose 5-phosphate + ATP = 5-phospho-alpha-D-ribose 1-diphosphate + AMP + H(+). It functions in the pathway metabolic intermediate biosynthesis; 5-phospho-alpha-D-ribose 1-diphosphate biosynthesis; 5-phospho-alpha-D-ribose 1-diphosphate from D-ribose 5-phosphate (route I): step 1/1. Its function is as follows. Involved in the biosynthesis of the central metabolite phospho-alpha-D-ribosyl-1-pyrophosphate (PRPP) via the transfer of pyrophosphoryl group from ATP to 1-hydroxyl of ribose-5-phosphate (Rib-5-P). This Streptococcus mutans serotype c (strain ATCC 700610 / UA159) protein is Putative ribose-phosphate pyrophosphokinase 2.